The sequence spans 435 residues: U-box domain-containing protein 21 (435 aa).

One can recognise a U-box domain in the interval 30-104; that stretch reads TIPPEFQCPI…QGWCVEKGSP (75 aa). ARM repeat units follow at residues 202 to 241, 245 to 285, 288 to 327, and 329 to 369; these read LEGI…EILS, TRVH…QMVL, PEIA…AICE, and EHGR…KLWK.

It carries out the reaction S-ubiquitinyl-[E2 ubiquitin-conjugating enzyme]-L-cysteine + [acceptor protein]-L-lysine = [E2 ubiquitin-conjugating enzyme]-L-cysteine + N(6)-ubiquitinyl-[acceptor protein]-L-lysine.. It participates in protein modification; protein ubiquitination. In terms of biological role, functions as an E3 ubiquitin ligase. The chain is U-box domain-containing protein 21 (PUB21) from Arabidopsis thaliana (Mouse-ear cress).